Reading from the N-terminus, the 154-residue chain is MAASRRLMKELEEIRKCGMKNFRNIQVDEANLLTWQGLIVPDNPPYDKGAFRIEINFPAEYPFKPPKITFKTKIYHPNIDEKGQVCLPVISAENWKPATKTDQVIQSLIALVNDPQPEHPLRADLAEEYSKDRKKFCKNAEEFTKKYGEKRPVD.

The 148-residue stretch at 2–149 (AASRRLMKEL…AEEFTKKYGE (148 aa)) folds into the UBC core domain. Residue C86 is the Glycyl thioester intermediate of the active site. An N6-acetyllysine modification is found at K131.

The protein belongs to the ubiquitin-conjugating enzyme family. As to quaternary structure, interacts with PRKN; involved in ubiquitination and degradation of misfolded proteins. Interacts with UBE3A. Interacts with CCNB1IP1, CBL, ZAP70, RNF19A, RNF19B and RNF144B. Interacts with ARIH1. Interacts with ARIH2 (via RING-type 1). Interacts with NCOA1; they functionally interact to regulate progesterone receptor transcriptional activity. Interacts with NDFIP1 (via N-terminus); the interaction mediates recruitment of UBE2L3 to ITCH and causes MAP3K7 ubiquitination. In terms of processing, ubiquitinated. The alteration of UBE2L3 protein levels during the S-phase of the cell cycle is due to ubiquitin-dependent proteasomal degradation. Autoubiquitinated in vitro.

The protein localises to the nucleus. Its subcellular location is the cytoplasm. The enzyme catalyses S-ubiquitinyl-[E1 ubiquitin-activating enzyme]-L-cysteine + [E2 ubiquitin-conjugating enzyme]-L-cysteine = [E1 ubiquitin-activating enzyme]-L-cysteine + S-ubiquitinyl-[E2 ubiquitin-conjugating enzyme]-L-cysteine.. The protein operates within protein modification; protein ubiquitination. Ubiquitin-conjugating enzyme E2 that specifically acts with HECT-type and RBR family E3 ubiquitin-protein ligases. Does not function with most RING-containing E3 ubiquitin-protein ligases because it lacks intrinsic E3-independent reactivity with lysine: in contrast, it has activity with the RBR family E3 enzymes, such as PRKN, RNF31 and ARIH1, that function like RING-HECT hybrids. Accepts ubiquitin from the E1 complex and catalyzes its covalent attachment to other proteins. Mediates ubiquitination by the CUL9-RBX1 complex. In vitro catalyzes 'Lys-11'-linked polyubiquitination. Involved in the selective degradation of short-lived and abnormal proteins. Down-regulated during the S-phase it is involved in progression through the cell cycle. Regulates nuclear hormone receptors transcriptional activity. May play a role in myelopoiesis. The protein is Ubiquitin-conjugating enzyme E2 L3 (UBE2L3) of Bos taurus (Bovine).